The chain runs to 1163 residues: Pesticidal crystal protein Cry26Aa (1163 aa).

This sequence belongs to the delta endotoxin family.

Promotes colloidosmotic lysis by binding to the midgut epithelial cells of insects. The protein is Pesticidal crystal protein Cry26Aa (cry26Aa) of Bacillus thuringiensis subsp. finitimus.